The primary structure comprises 237 residues: N-(5'-phosphoribosyl)anthranilate isomerase (237 aa).

Belongs to the TrpF family.

It catalyses the reaction N-(5-phospho-beta-D-ribosyl)anthranilate = 1-(2-carboxyphenylamino)-1-deoxy-D-ribulose 5-phosphate. Its pathway is amino-acid biosynthesis; L-tryptophan biosynthesis; L-tryptophan from chorismate: step 3/5. In Komagataella pastoris (Yeast), this protein is N-(5'-phosphoribosyl)anthranilate isomerase (TRP1).